Consider the following 487-residue polypeptide: Betaine aldehyde dehydrogenase (487 aa).

K(+) is bound by residues Ile-27 and Asp-93. 149–151 is an NAD(+) binding site; the sequence is GAW. Lys-161 serves as the catalytic Charge relay system. NAD(+)-binding positions include 175 to 178 and 228 to 231; these read KPSE and SVPT. K(+) is bound at residue Leu-243. The active-site Proton acceptor is the Glu-249. 3 residues coordinate NAD(+): Gly-251, Cys-283, and Glu-384. Cys-283 acts as the Nucleophile in catalysis. A Cysteine sulfenic acid (-SOH) modification is found at Cys-283. K(+) contacts are provided by Lys-454 and Gly-457. The Charge relay system role is filled by Glu-461.

The protein belongs to the aldehyde dehydrogenase family. Dimer of dimers. Requires K(+) as cofactor.

It carries out the reaction betaine aldehyde + NAD(+) + H2O = glycine betaine + NADH + 2 H(+). It functions in the pathway amine and polyamine biosynthesis; betaine biosynthesis via choline pathway; betaine from betaine aldehyde: step 1/1. In terms of biological role, involved in the biosynthesis of the osmoprotectant glycine betaine. Catalyzes the irreversible oxidation of betaine aldehyde to the corresponding acid. This is Betaine aldehyde dehydrogenase from Brucella canis (strain ATCC 23365 / NCTC 10854 / RM-666).